We begin with the raw amino-acid sequence, 740 residues long: F-BAR and double SH3 domains protein 2 (740 aa).

The region spanning 8 to 282 (VKVTQELRNI…NSSKVVRDYN (275 aa)) is the F-BAR domain. The tract at residues 303 to 323 (PCDSDTSRQLESETGTTEEHS) is disordered. Basic and acidic residues predominate over residues 307–323 (DTSRQLESETGTTEEHS). A coiled-coil region spans residues 356–397 (GVALSEQSRAELEQKIDEARESIRKAEIIKLKAEARLDLLKQ). SH3 domains are found at residues 469 to 530 (NYPL…FPTS) and 567 to 629 (ASVC…ELSA). Residues 567-629 (ASVCFVKALY…PSVLVEELSA (63 aa)) form a required and sufficient for location at clathrin-coated pits region. The span at 629-645 (ASENGDTPWTREIQISP) shows a compositional bias: polar residues. Residues 629–740 (ASENGDTPWT…KMEDVEITLV (112 aa)) form a disordered region. A compositionally biased stretch (pro residues) spans 646 to 657 (SPKPHTSLPPLP). A phosphoserine mark is found at Ser-675 and Ser-681. Polar residues predominate over residues 675–706 (SQFFPRSPSANENSLHAESPGFSQASRQTPDT).

As to quaternary structure, homodimer. Interacts (via SH3 domain 2) with ITSN1 (via SH3 domain 4). Recruited to clathrin-coated pits during a mid-to-late stage of assembly via interaction with ITSN1. Interacts (via SH3 domain 1) with WASL. Interacts with WAS. Interacts with CASK and MAGI1. CASK inhibits interaction with MAGI1. Phosphorylated. Phosphorylation on a Ser residue is important for recruitment to the cell membrane and for its role in promoting endocytosis. As to expression, detected in inner ear vestibula and in stereocilia in cochlear hair cell bundles (at protein level). Ubiquitous. Detected in testis, liver, brain cortex, cerebellum, kidney, organ of Corti, utricle, spiral ganglion, tongue and eye.

The protein localises to the cytoplasm. Its subcellular location is the cell junction. The protein resides in the membrane. It is found in the clathrin-coated pit. It localises to the cell membrane. The protein localises to the cell projection. Its subcellular location is the stereocilium. Adapter protein that plays a role in endocytosis via clathrin-coated pits. Contributes to the internalization of cell surface receptors, such as integrin ITGB1 and transferrin receptor. Promotes endocytosis of EGFR in cancer cells, and thereby contributes to the down-regulation of EGFR signaling. Recruited to clathrin-coated pits during a mid-to-late stage of assembly, where it is required for normal progress from U-shaped intermediate stage pits to terminal, omega-shaped pits. Binds to membranes enriched in phosphatidylinositol 3,4-bisphosphate or phosphatidylinositol 3,4,5-trisphosphate. When bound to membranes, promotes actin polymerization via its interaction with WAS and/or WASL which leads to the activation of the Arp2/3 complex. Does not promote actin polymerisation in the absence of membranes. In Mus musculus (Mouse), this protein is F-BAR and double SH3 domains protein 2 (Fchsd2).